Consider the following 234-residue polypeptide: Cytochrome b (234 aa).

4 helical membrane passes run 33–53, 77–98, 113–133, and 178–198; these read FGSLLGLCLMIQILTGLFLAM, WLIRYLHANGASMFFICLYMHV, WNIGIILLFAVMATAFMGYVL, and FFAFHFILPFIIAALVMIHLL. Positions 83 and 97 each coordinate heme b. Residues H182 and H196 each coordinate heme b. H201 contacts a ubiquinone. A helical membrane pass occupies residues 226-234; it reads IKDLLGFLV.

Belongs to the cytochrome b family. In terms of assembly, the cytochrome bc1 complex contains 11 subunits: 3 respiratory subunits (MT-CYB, CYC1 and UQCRFS1), 2 core proteins (UQCRC1 and UQCRC2) and 6 low-molecular weight proteins (UQCRH/QCR6, UQCRB/QCR7, UQCRQ/QCR8, UQCR10/QCR9, UQCR11/QCR10 and a cleavage product of UQCRFS1). This cytochrome bc1 complex then forms a dimer. The cofactor is heme b.

The protein resides in the mitochondrion inner membrane. In terms of biological role, component of the ubiquinol-cytochrome c reductase complex (complex III or cytochrome b-c1 complex) that is part of the mitochondrial respiratory chain. The b-c1 complex mediates electron transfer from ubiquinol to cytochrome c. Contributes to the generation of a proton gradient across the mitochondrial membrane that is then used for ATP synthesis. The sequence is that of Cytochrome b (MT-CYB) from Lepus arcticus (Arctic hare).